The chain runs to 353 residues: UPF0283 membrane protein YcjF (353 aa).

Helical transmembrane passes span 70-90 (MVMG…VQWT), 100-120 (VALG…GSVV), and 213-233 (ESTL…FIAW).

The protein belongs to the UPF0283 family.

It localises to the cell inner membrane. This chain is UPF0283 membrane protein YcjF, found in Escherichia coli O7:K1 (strain IAI39 / ExPEC).